The sequence spans 365 residues: MLVPPEMIAVQSKLIYQMNKYCADRVQTRKAQIHKTIQEVCRVVQDVLKEVEVQEPRFISSLNDYNGRYDGLEVVSPTEFEIIIYLNQMGVLNFVDDGTLPGCAVLKLSDGRKRSMSLWVEFITASGYLSARKIRSRFQTLVAQACDKCSYRDSVKMIADTTEVKLRIRERIIVQITPAFKCAGLWPRSASHWPLPQIPWPHPNIVSEVKTEGFDMLSKECIALQGKNSAMEGDAWVLSFTEAENKLLQGGCRRRCLSILKTLRDRHLDLPGNPVTSYVMKTLLLYECEKHPREMEWDENCMGDRINGIFLQLISCLQCRRCPHYFLPNMDLFKGKSPGALENASKQVWRLTRIMLTNSRCLEEL.

The protein belongs to the mab-21 family.

The protein is Protein mab-21 (mab-21) of Anopheles gambiae (African malaria mosquito).